Here is a 235-residue protein sequence, read N- to C-terminus: Ribonuclease PH (235 aa).

Phosphate is bound by residues Arg86 and 124-126 (GTR).

It belongs to the RNase PH family. Homohexameric ring arranged as a trimer of dimers.

The catalysed reaction is tRNA(n+1) + phosphate = tRNA(n) + a ribonucleoside 5'-diphosphate. Its function is as follows. Phosphorolytic 3'-5' exoribonuclease that plays an important role in tRNA 3'-end maturation. Removes nucleotide residues following the 3'-CCA terminus of tRNAs; can also add nucleotides to the ends of RNA molecules by using nucleoside diphosphates as substrates, but this may not be physiologically important. Probably plays a role in initiation of 16S rRNA degradation (leading to ribosome degradation) during starvation. The sequence is that of Ribonuclease PH from Francisella tularensis subsp. holarctica (strain FTNF002-00 / FTA).